We begin with the raw amino-acid sequence, 237 residues long: Sugar fermentation stimulation protein homolog (237 aa).

It belongs to the SfsA family.

The sequence is that of Sugar fermentation stimulation protein homolog from Colwellia psychrerythraea (strain 34H / ATCC BAA-681) (Vibrio psychroerythus).